We begin with the raw amino-acid sequence, 515 residues long: GMP synthase [glutamine-hydrolyzing] (515 aa).

The region spanning K6–D198 is the Glutamine amidotransferase type-1 domain. C83 serves as the catalytic Nucleophile. Residues H172 and E174 contribute to the active site. Positions W199 to R390 constitute a GMPS ATP-PPase domain. S226–T232 is a binding site for ATP.

In terms of assembly, homodimer.

It catalyses the reaction XMP + L-glutamine + ATP + H2O = GMP + L-glutamate + AMP + diphosphate + 2 H(+). It participates in purine metabolism; GMP biosynthesis; GMP from XMP (L-Gln route): step 1/1. Its function is as follows. Catalyzes the synthesis of GMP from XMP. The polypeptide is GMP synthase [glutamine-hydrolyzing] (Nitratidesulfovibrio vulgaris (strain DP4) (Desulfovibrio vulgaris)).